A 216-amino-acid polypeptide reads, in one-letter code: Large ribosomal subunit protein uL1z (216 aa).

The protein belongs to the universal ribosomal protein uL1 family. Interacts with the GTPase NUG2.

This is Large ribosomal subunit protein uL1z (RPL10AA) from Arabidopsis thaliana (Mouse-ear cress).